Here is a 145-residue protein sequence, read N- to C-terminus: Antiholin-like protein LrgA (145 aa).

4 consecutive transmembrane segments (helical) span residues 13–30 (FFHQVIVIALVLFVSKII), 40–62 (GSVIGLVLLFVLLCTGAVKLGEV), 69–91 (LTNNIGLLFVPAGISVVNSLGVI), and 95–117 (PFLIIGLIIVSTILLLICTGYVT).

It belongs to the CidA/LrgA family. LrgA subfamily.

The protein localises to the cell membrane. In terms of biological role, inhibits the expression or activity of extracellular murein hydrolases by interacting, possibly with LrgB, with the holin-like proteins CidA and/or CidB. The LrgAB and CidAB proteins may affect the proton motive force of the membrane. May be involved in programmed cell death (PCD), possibly triggering PCD in response to antibiotics and environmental stresses. The protein is Antiholin-like protein LrgA of Staphylococcus aureus (strain MW2).